Consider the following 436-residue polypeptide: Trigger factor (436 aa).

Disordered regions lie at residues 1–26 and 81–100; these read MQVS…RVEN and QESL…TGEG. Positions 161 to 246 constitute a PPIase FKBP-type domain; sequence EDRVVIDFHG…VKRVEEPQLP (86 aa).

It belongs to the FKBP-type PPIase family. Tig subfamily.

It localises to the cytoplasm. It catalyses the reaction [protein]-peptidylproline (omega=180) = [protein]-peptidylproline (omega=0). Functionally, involved in protein export. Acts as a chaperone by maintaining the newly synthesized protein in an open conformation. Functions as a peptidyl-prolyl cis-trans isomerase. This is Trigger factor from Halorhodospira halophila (strain DSM 244 / SL1) (Ectothiorhodospira halophila (strain DSM 244 / SL1)).